The sequence spans 113 residues: Nucleoid-associated protein CLH_3225 (113 aa).

Positions 1–14 (MAKGGFPGGFGGGN) are enriched in gly residues. Residues 1–31 (MAKGGFPGGFGGGNMNNLMKQAQKLQKQMED) form a disordered region.

Belongs to the YbaB/EbfC family. As to quaternary structure, homodimer.

The protein resides in the cytoplasm. The protein localises to the nucleoid. In terms of biological role, binds to DNA and alters its conformation. May be involved in regulation of gene expression, nucleoid organization and DNA protection. The protein is Nucleoid-associated protein CLH_3225 of Clostridium botulinum (strain Alaska E43 / Type E3).